Here is a 392-residue protein sequence, read N- to C-terminus: GTPase Obg (392 aa).

Positions 1-159 constitute an Obg domain; it reads MKFVDEATIK…RELRLELLLL (159 aa). One can recognise an OBG-type G domain in the interval 160–333; that stretch reads ADVGMLGLPN…VCNELSDFMD (174 aa). GTP-binding positions include 166–173, 191–195, 213–216, 283–286, and 314–316; these read GLPNAGKS, FTTLI, DIPG, NKTD, and AAV. Residues serine 173 and threonine 193 each contribute to the Mg(2+) site. A disordered region spans residues 364 to 392; sequence GKNVVTEDGDDDDDWDDEEDDGHVIYARD. Residues 370–384 are compositionally biased toward acidic residues; sequence EDGDDDDDWDDEEDD.

The protein belongs to the TRAFAC class OBG-HflX-like GTPase superfamily. OBG GTPase family. Monomer. Mg(2+) is required as a cofactor.

The protein resides in the cytoplasm. An essential GTPase which binds GTP, GDP and possibly (p)ppGpp with moderate affinity, with high nucleotide exchange rates and a fairly low GTP hydrolysis rate. Plays a role in control of the cell cycle, stress response, ribosome biogenesis and in those bacteria that undergo differentiation, in morphogenesis control. The protein is GTPase Obg of Aliivibrio salmonicida (strain LFI1238) (Vibrio salmonicida (strain LFI1238)).